The primary structure comprises 122 residues: MARISGVDLPREKRIEIGLTYVYGIGRVSSNRILAKAGVNPDTRVRDLTDEEVAKIRDVIDETMLVEGDLRREIALNIKRLQEIGCYRGIRHRKGLPVRGQKTKTNARTRKGPKRTVANKKK.

The disordered stretch occupies residues 95–122; sequence GLPVRGQKTKTNARTRKGPKRTVANKKK.

It belongs to the universal ribosomal protein uS13 family. In terms of assembly, part of the 30S ribosomal subunit. Forms a loose heterodimer with protein S19. Forms two bridges to the 50S subunit in the 70S ribosome.

In terms of biological role, located at the top of the head of the 30S subunit, it contacts several helices of the 16S rRNA. In the 70S ribosome it contacts the 23S rRNA (bridge B1a) and protein L5 of the 50S subunit (bridge B1b), connecting the 2 subunits; these bridges are implicated in subunit movement. Contacts the tRNAs in the A and P-sites. The sequence is that of Small ribosomal subunit protein uS13 from Lachnoclostridium phytofermentans (strain ATCC 700394 / DSM 18823 / ISDg) (Clostridium phytofermentans).